The sequence spans 559 residues: MSFDHRKYRPVAVIDKPDRRWPNQRIEKAPLWAAVDLRDGNQALIKPMSVAQKRRFFQMLVELGFKEIEVGFPSASQIDFDFCRALIEEDLVPDDVHIQVLTQAREDLIARTFDSLKGAKNAIVHIYNATSPTFREQVFNVDKAGCKAIAVRAAEWVKENAAKQPDTHWSFQYSPETFSATETDFAIEVIDAVNAVWRPDQGQRVIINLPATVEVSTPNVFADQVEMVHDNIQYRDDVIISVHTHDDRGCGVAAAEMAVMAGADRVEGTLLGNGERTGNMDLVTAGMNLYSQGIDPGIDFSRMKEIVALVEEITDIQTHPRHPYAGDLVFSAFSGSHQDAIRKCLARYQEGDIWTAAYLPIDPADVGRRYEEVVRINSQSGKGGVAHVLERDFGIDLPRWLQQELAGVVQGDAEEDGGEITSERVHRRFNSDYLNVPMGWVLRSYDLNRSNEQVQAQISIGDDRQPVTLLSGRGDGAMSALVDALNRRIGGEVKVVSFDEYSLGDNTEANAMACVRVQVGDSTQSAVAMAVDTTAAALQAILSAVGRMQETSEQLIANS.

Residues 30 to 304 (PLWAAVDLRD…DPGIDFSRMK (275 aa)) enclose the Pyruvate carboxyltransferase domain. Mg(2+)-binding residues include aspartate 39, histidine 243, histidine 245, and asparagine 279. The regulatory domain stretch occupies residues 436–559 (VPMGWVLRSY…ETSEQLIANS (124 aa)).

It belongs to the alpha-IPM synthase/homocitrate synthase family. LeuA type 2 subfamily. In terms of assembly, homodimer. Mg(2+) is required as a cofactor.

Its subcellular location is the cytoplasm. The catalysed reaction is 3-methyl-2-oxobutanoate + acetyl-CoA + H2O = (2S)-2-isopropylmalate + CoA + H(+). The protein operates within amino-acid biosynthesis; L-leucine biosynthesis; L-leucine from 3-methyl-2-oxobutanoate: step 1/4. Its function is as follows. Catalyzes the condensation of the acetyl group of acetyl-CoA with 3-methyl-2-oxobutanoate (2-ketoisovalerate) to form 3-carboxy-3-hydroxy-4-methylpentanoate (2-isopropylmalate). This Alcanivorax borkumensis (strain ATCC 700651 / DSM 11573 / NCIMB 13689 / SK2) protein is 2-isopropylmalate synthase.